Here is a 213-residue protein sequence, read N- to C-terminus: Phosphate-specific transport system accessory protein PhoU homolog 2 (213 aa).

It belongs to the PhoU family. As to quaternary structure, homodimer.

It localises to the cytoplasm. In terms of biological role, plays a role in the regulation of phosphate uptake. In this role, it may bind, possibly as a chaperone, to PhoR, PhoP or a PhoR-PhoP complex to promote dephosphorylation of phospho-PhoP, or inhibit formation of the PhoR-PhoP transitory complex. This is Phosphate-specific transport system accessory protein PhoU homolog 2 (phoU2) from Mycobacterium bovis (strain ATCC BAA-935 / AF2122/97).